Here is a 198-residue protein sequence, read N- to C-terminus: Recombination protein RecR (198 aa).

Residues 56-71 form a C4-type zinc finger; sequence CKICHSLTENEICDIC. The Toprim domain occupies 79 to 174; it reads HLLCVVESPA…HMTRIAQGVP (96 aa).

It belongs to the RecR family.

In terms of biological role, may play a role in DNA repair. It seems to be involved in an RecBC-independent recombinational process of DNA repair. It may act with RecF and RecO. The polypeptide is Recombination protein RecR (Acinetobacter baylyi (strain ATCC 33305 / BD413 / ADP1)).